We begin with the raw amino-acid sequence, 259 residues long: DNA-directed RNA polymerase subunit Rpo3 (259 aa).

This sequence belongs to the archaeal Rpo3/eukaryotic RPB3 RNA polymerase subunit family. In terms of assembly, part of the RNA polymerase complex.

The protein resides in the cytoplasm. The enzyme catalyses RNA(n) + a ribonucleoside 5'-triphosphate = RNA(n+1) + diphosphate. Functionally, DNA-dependent RNA polymerase (RNAP) catalyzes the transcription of DNA into RNA using the four ribonucleoside triphosphates as substrates. This chain is DNA-directed RNA polymerase subunit Rpo3, found in Thermococcus kodakarensis (strain ATCC BAA-918 / JCM 12380 / KOD1) (Pyrococcus kodakaraensis (strain KOD1)).